The chain runs to 158 residues: 2-amino-4-hydroxy-6-hydroxymethyldihydropteridine pyrophosphokinase (158 aa).

The protein belongs to the HPPK family.

The catalysed reaction is 6-hydroxymethyl-7,8-dihydropterin + ATP = (7,8-dihydropterin-6-yl)methyl diphosphate + AMP + H(+). Its pathway is cofactor biosynthesis; tetrahydrofolate biosynthesis; 2-amino-4-hydroxy-6-hydroxymethyl-7,8-dihydropteridine diphosphate from 7,8-dihydroneopterin triphosphate: step 4/4. In terms of biological role, catalyzes the transfer of pyrophosphate from adenosine triphosphate (ATP) to 6-hydroxymethyl-7,8-dihydropterin, an enzymatic step in folate biosynthesis pathway. The protein is 2-amino-4-hydroxy-6-hydroxymethyldihydropteridine pyrophosphokinase (folK) of Methylorubrum extorquens (strain ATCC 14718 / DSM 1338 / JCM 2805 / NCIMB 9133 / AM1) (Methylobacterium extorquens).